The chain runs to 293 residues: Glutamyl-Q tRNA(Asp) synthetase (293 aa).

Residues 8-12 (RFAPS) and Glu-44 each bind L-glutamate. Residues 11–21 (PSPSGPLHAGS) carry the 'HIGH' region motif. The Zn(2+) site is built by Cys-98, Cys-100, Tyr-120, and Cys-124. Tyr-183 and Arg-201 together coordinate L-glutamate. Positions 239 to 243 (KLSKQ) match the 'KMSKS' region motif. Lys-242 contributes to the ATP binding site.

It belongs to the class-I aminoacyl-tRNA synthetase family. GluQ subfamily. It depends on Zn(2+) as a cofactor.

Its function is as follows. Catalyzes the tRNA-independent activation of glutamate in presence of ATP and the subsequent transfer of glutamate onto a tRNA(Asp). Glutamate is transferred on the 2-amino-5-(4,5-dihydroxy-2-cyclopenten-1-yl) moiety of the queuosine in the wobble position of the QUC anticodon. The chain is Glutamyl-Q tRNA(Asp) synthetase from Janthinobacterium sp. (strain Marseille) (Minibacterium massiliensis).